A 305-amino-acid polypeptide reads, in one-letter code: tRNA uridine(34) hydroxylase (305 aa).

In terms of domain architecture, Rhodanese spans 125–219 (ADENTVVVDT…YLEEVPREDS (95 aa)). Residue cysteine 179 is the Cysteine persulfide intermediate of the active site.

The protein belongs to the TrhO family.

It carries out the reaction uridine(34) in tRNA + AH2 + O2 = 5-hydroxyuridine(34) in tRNA + A + H2O. Catalyzes oxygen-dependent 5-hydroxyuridine (ho5U) modification at position 34 in tRNAs. In Brucella anthropi (strain ATCC 49188 / DSM 6882 / CCUG 24695 / JCM 21032 / LMG 3331 / NBRC 15819 / NCTC 12168 / Alc 37) (Ochrobactrum anthropi), this protein is tRNA uridine(34) hydroxylase.